The chain runs to 239 residues: Bidirectional sugar transporter SWEET8 (239 aa).

Topologically, residues 1–6 (MVDAKQ) are extracellular. A helical transmembrane segment spans residues 7–27 (VRFIIGVIGNVISFGLFAAPA). The MtN3/slv 1 domain maps to 9-98 (FIIGVIGNVI…VYLMYCGHKK (90 aa)). Over 28 to 44 (KTFWRIFKKKSVEEFSY) the chain is Cytoplasmic. Residues 45-65 (VPYVATVMNCMLWVFYGLPVV) traverse the membrane as a helical segment. At 66–69 (HKDS) the chain is on the extracellular side. Residues 70–90 (ILVSTINGVGLVIELFYVGVY) form a helical membrane-spanning segment. The Cytoplasmic portion of the chain corresponds to 91–103 (LMYCGHKKNHRRN). Residues 104–124 (ILGFLALEVILVVAIILITLF) form a helical membrane-spanning segment. Topologically, residues 125–135 (ALKGDFVKQTF) are extracellular. In terms of domain architecture, MtN3/slv 2 spans 134–185 (TFVGVICDVFNIAMYGAPSLAIIKVVKTKSVEYMPFLLSLVCFVNAGIWTTY). A helical membrane pass occupies residues 136–156 (VGVICDVFNIAMYGAPSLAII). Residues 157 to 168 (KVVKTKSVEYMP) are Cytoplasmic-facing. Residues 169–189 (FLLSLVCFVNAGIWTTYSLIF) traverse the membrane as a helical segment. The Extracellular portion of the chain corresponds to 190-194 (KIDYY). Residues 195–215 (VLASNGIGTFLALSQLIVYFM) traverse the membrane as a helical segment. The Cytoplasmic portion of the chain corresponds to 216-239 (YYKSTPKEKTVKPSEVEISATERV).

This sequence belongs to the SWEET sugar transporter family. As to quaternary structure, forms homooligomers and heterooligomers with SWEET4, SWEET5, SWEET6, SWEET7, SWEET9, SWEET10, SWEET11, SWEET13, SWEET15, SWEET16 and SWEET17. As to expression, expressed in inflorescences, embryo sacs and pollen, and at a lower level in stems. Barely detected in roots, leaves and seedlings.

The protein localises to the cell membrane. Its function is as follows. Mediates both low-affinity uptake and efflux of sugar across the plasma membrane. Required, in pollen, for microspore cell integrity and primexine pattern formation. The sequence is that of Bidirectional sugar transporter SWEET8 from Arabidopsis thaliana (Mouse-ear cress).